Here is a 716-residue protein sequence, read N- to C-terminus: Segment polarity protein dishevelled homolog DVL-3 (716 aa).

The region spanning 1–82 is the DIX domain; it reads MGETKIIYHL…RVVSWLVSAE (82 aa). An Omega-N-methylarginine modification is found at Arg27. 2 positions are modified to phosphoserine: Ser48 and Ser125. A disordered region spans residues 85 to 235; the sequence is HPDPAPFCAD…VSRIERSSSF (151 aa). A compositionally biased stretch (basic and acidic residues) spans 142 to 156; that stretch reads QRERPRRRDGPEHAT. The span at 175–190 shows a compositional bias: low complexity; sequence SSSTLMSSELETTSFF. Phosphoserine is present on Ser192. Over residues 199-212 the composition is skewed to low complexity; the sequence is SRFSSSTEQSSASR. Position 212 is an omega-N-methylarginine (Arg212). Basic residues predominate over residues 213-226; that stretch reads LMRRHKRRRRKQKV. The 73-residue stretch at 249–321 folds into the PDZ domain; sequence TVTLNMEKYN…NDDAVRVLRE (73 aa). Arg271 bears the Asymmetric dimethylarginine; by PRMT1; alternate mark. 2 positions are modified to symmetric dimethylarginine; by PRMT7; alternate: Arg271 and Arg342. Arg342 carries the omega-N-methylarginine; alternate modification. Thr346 bears the Phosphothreonine mark. A DEP domain is found at 422 to 496; sequence PESGLEVRDR…SEQCYYIFGD (75 aa). The segment at 546–691 is disordered; that stretch reads PYNPHPGFPE…PPGRDLASVP (146 aa). Over residues 565 to 581 the composition is skewed to low complexity; it reads ASSQHSEGSRSSGSNRS. Composition is skewed to basic and acidic residues over residues 582–595 and 604–622; these read GSDRRKEKDPKAGD and ESDHTTRSSLRGPRERAPS. At Arg614 the chain carries Symmetric dimethylarginine; by PRMT7. The span at 653–682 shows a compositional bias: pro residues; it reads YGPPGVPPLYGPPMLMMPPPPAAMGPPGAP. Ser697 carries the phosphoserine modification. Arg698 carries the post-translational modification Omega-N-methylarginine; alternate. At Arg698 the chain carries Dimethylated arginine; alternate. Ser700 is subject to Phosphoserine.

The protein belongs to the DSH family. As to quaternary structure, interacts (via the PDZ domain) with the C-terminal regions of VANGL1 and VANGL2. Interacts (via the region containing both the PDZ and DEP domains) with LRRFIP2; the DIX domain may inhibit this interaction. Interacts with CYLD, CEP164 and DAB2. Interacts with DCDC2. Interacts with FOXK1 and FOXK2. Interacts with DAAM2. Ubiquitinated. Deubiquitinated by CYLD, which acts on 'Lys-63'-linked ubiquitin chains. In terms of processing, phosphorylated by CSNK1D. Post-translationally, arginine methylation may function as a switch in regulation of function in Wnt signaling.

It is found in the cytoplasm. Involved in the signal transduction pathway mediated by multiple Wnt genes. This Homo sapiens (Human) protein is Segment polarity protein dishevelled homolog DVL-3 (DVL3).